Consider the following 1486-residue polypeptide: Chromosome partition protein MukB (1486 aa).

34–41 (GGNGAGKS) contacts ATP. Coiled coils occupy residues 326 to 418 (LEAD…QYNQ), 444 to 480 (LETFQAKELEATEKMLSLEQKMSMAQTAHSQFEQAYQ), and 509 to 603 (RHLA…RAPV). The tract at residues 666–783 (PGGSEDQRLN…EVPLFGRAAR (118 aa)) is flexible hinge. Coiled coils occupy residues 835–923 (EAEI…AKLE), 977–1115 (EMLS…TAKA), and 1209–1266 (VEAI…QNVS).

It belongs to the SMC family. MukB subfamily. In terms of assembly, homodimerization via its hinge domain. Binds to DNA via its C-terminal region. Interacts, and probably forms a ternary complex, with MukE and MukF via its C-terminal region. The complex formation is stimulated by calcium or magnesium. Interacts with tubulin-related protein FtsZ.

Its subcellular location is the cytoplasm. It is found in the nucleoid. Its function is as follows. Plays a central role in chromosome condensation, segregation and cell cycle progression. Functions as a homodimer, which is essential for chromosome partition. Involved in negative DNA supercoiling in vivo, and by this means organize and compact chromosomes. May achieve or facilitate chromosome segregation by condensation DNA from both sides of a centrally located replisome during cell division. This chain is Chromosome partition protein MukB, found in Escherichia coli (strain SMS-3-5 / SECEC).